Reading from the N-terminus, the 71-residue chain is Small ribosomal subunit protein bS21 (71 aa).

Basic residues predominate over residues 49–59 (AAAAVKRHAKK). The tract at residues 49-71 (AAAAVKRHAKKVQREQRRSVRLY) is disordered. Positions 60 to 71 (VQREQRRSVRLY) are enriched in basic and acidic residues.

Belongs to the bacterial ribosomal protein bS21 family.

The sequence is that of Small ribosomal subunit protein bS21 from Stutzerimonas stutzeri (strain A1501) (Pseudomonas stutzeri).